The primary structure comprises 828 residues: Putative dual specificity tyrosine-phosphorylation-regulated kinase 3 homolog (828 aa).

Basic and acidic residues predominate over residues 1 to 14 (MVGSQEKKNNHIEL). Positions 1–26 (MVGSQEKKNNHIELSETPATDKNNLN) are disordered. The segment covering 17 to 26 (TPATDKNNLN) has biased composition (polar residues). The region spanning 276-589 (YEMLKIIGKG…PSEALKHPWL (314 aa)) is the Protein kinase domain. Residues 282–290 (IGKGSFGQV) and Lys-305 each bind ATP. The active-site Proton acceptor is Asp-402. Ser-616 bears the Phosphoserine mark.

Belongs to the protein kinase superfamily. CMGC Ser/Thr protein kinase family. MNB/DYRK subfamily. Post-translationally, autophosphorylated on tyrosine residues.

It catalyses the reaction L-seryl-[protein] + ATP = O-phospho-L-seryl-[protein] + ADP + H(+). It carries out the reaction L-threonyl-[protein] + ATP = O-phospho-L-threonyl-[protein] + ADP + H(+). The catalysed reaction is L-tyrosyl-[protein] + ATP = O-phospho-L-tyrosyl-[protein] + ADP + H(+). This Drosophila melanogaster (Fruit fly) protein is Putative dual specificity tyrosine-phosphorylation-regulated kinase 3 homolog (Dyrk3).